The chain runs to 1257 residues: LIM domain kinase 1 (1257 aa).

A disordered region spans residues 1 to 24; sequence MHHQQRLRANGGRGGTGLGAGSGP. Positions 1-147 are interaction with LATS1; sequence MHHQQRLRAN…ERSKLYCGQC (147 aa). The segment covering 11–24 has biased composition (gly residues); the sequence is GGRGGTGLGAGSGP. LIM zinc-binding domains follow at residues 31–93 and 94–154; these read PLCA…RFGD and ACQQ…RSCQ. Residues 174–274 enclose the PDZ domain; it reads LVEIPKDATP…MLQLTVEHDP (101 aa). Residues 401–686 form the Protein kinase domain; the sequence is LVIGEKLGEG…PCFETLHVWL (286 aa). ATP contacts are provided by residues 407–415 and K430; that span reads LGEGFFGKV. D522 is a catalytic residue. 3 disordered regions span residues 552–587, 759–811, and 881–900; these read LPSG…RQRR, QDIP…ERAL, and EELL…QHHR. Positions 794–811 are enriched in basic and acidic residues; it reads QEERRNLTPDTESKERAL. Residue S1000 is modified to Phosphoserine. Disordered regions lie at residues 1010–1037, 1085–1182, and 1212–1257; these read AKQL…NPPL, SAQQ…EKVH, and AAGT…NTRC. 2 stretches are compositionally biased toward polar residues: residues 1085–1095 and 1113–1125; these read SAQQQRTSSNH and RTGS…SNCV. Low complexity-rich tracts occupy residues 1126 to 1137 and 1145 to 1166; these read SPTRSSRPGSPT and TAAT…HQQQ.

Belongs to the protein kinase superfamily. TKL Ser/Thr protein kinase family. As to quaternary structure, interacts with LATS1, and this interaction inhibits phosphorylation of tsr/cofilin. In terms of processing, phosphorylated on serine and/or threonine residues by ROCK1. Phosphorylated by PAK4 resulting in increased LIMK1 ability to phosphorylate cofilin. May be dephosphorylated and inactivated by SSH1. In terms of tissue distribution, expressed throughout the imaginal disks of the eye, leg and wing.

The protein localises to the cytoplasm. The protein resides in the cleavage furrow. It localises to the midbody. It carries out the reaction L-seryl-[protein] + ATP = O-phospho-L-seryl-[protein] + ADP + H(+). The catalysed reaction is L-threonyl-[protein] + ATP = O-phospho-L-threonyl-[protein] + ADP + H(+). Its function is as follows. Protein kinase which regulates actin filament dynamics. Phosphorylates and inactivates the actin binding/depolymerizing factor tsr/cofilin, thereby stabilizing the actin cytoskeleton. Modulation of actin cytoskeleton dynamics may be essential for imaginal disk morphogenesis and axon guidance. This Drosophila melanogaster (Fruit fly) protein is LIM domain kinase 1 (LIMK1).